Here is a 115-residue protein sequence, read N- to C-terminus: Xenovulene A biosynthesis cluster protein asL2 (115 aa).

Part of the gene cluster that mediates the biosynthesis of xenovulene A, an unusual meroterpenoid that has potent inhibitory effects on the human gamma-aminobutyrate A (GABAA) benzodiazepine receptor. The first step of xenovulene A biosynthesis is the biosynthesis of 3-methylorcinaldehyde performed by the non-reducing polyketide synthase aspks1. The salicylate hydroxylase asL1 then catalyzes the oxidative dearomatization of 3-methylorcinaldehyde to yield a dearomatized hydroxycyclohexadione. The 2-oxoglutarate-dependent dioxygenase asL3 further catalyzes the oxidative ring expansion to provide the first tropolone metabolite. The cytochrome P450 monooxygenase asR2 allows the synthesis of tropolone hemiacetal. In parallel, a previously unrecognised class of terpene cyclase, asR6, produces alpha-humulene from farnesylpyrophosphate (FPP). The putative Diels-Alderase asR5 probably catalyzes the formation of the tropolone-humulene skeleton by linking humulene and the polyketide moiety. Oxidative-ring contractions catalyzed by asL4 and asL6 then processively remove carbon atoms from the polyketide to yield xenovulene A. The sequence is that of Xenovulene A biosynthesis cluster protein asL2 from Sarocladium schorii (Acremonium strictum (strain IMI 501407)).